Reading from the N-terminus, the 625-residue chain is Cytochrome c oxidase subunit 1 (625 aa).

A helical transmembrane segment spans residues 23-43 (IAIMYLIAGTLFFVKAGVMAL). His-69 contacts Fe(II)-heme a. Helical transmembrane passes span 72-92 (IMLF…VIPL), 99-119 (VAFP…GLLL), 151-171 (FYVL…INFL), 195-215 (FISS…LALL), 240-260 (IFWI…FGII), and 272-292 (LFGY…GFMV). Residues His-246 and Tyr-250 each contribute to the Cu cation site. A cross-link (1'-histidyl-3'-tyrosine (His-Tyr)) is located at residues 246-250 (HPEVY). Cu cation is bound by residues His-295 and His-296. Helical transmembrane passes span 309-329 (IFAV…FNWL) and 343-363 (MLFA…GVML). His-381 contacts heme a3. The next 5 membrane-spanning stretches (helical) occupy residues 382 to 402 (FHYI…FYWY), 417 to 437 (LFFW…HLLG), 460 to 480 (ISTI…INVI), 551 to 571 (SILP…LIML), and 577 to 597 (IINP…CMFV). His-383 provides a ligand contact to Fe(II)-heme a.

Belongs to the heme-copper respiratory oxidase family.

It localises to the cell membrane. It carries out the reaction 4 Fe(II)-[cytochrome c] + O2 + 8 H(+)(in) = 4 Fe(III)-[cytochrome c] + 2 H2O + 4 H(+)(out). It participates in energy metabolism; oxidative phosphorylation. Its function is as follows. Cytochrome c oxidase is the component of the respiratory chain that catalyzes the reduction of oxygen to water. Subunits 1-3 form the functional core of the enzyme complex. CO I is the catalytic subunit of the enzyme. Electrons originating in cytochrome c are transferred via the copper A center of subunit 2 and heme A of subunit 1 to the bimetallic center formed by heme A3 and copper B. This is Cytochrome c oxidase subunit 1 (ctaD) from Alkalihalophilus pseudofirmus (strain ATCC BAA-2126 / JCM 17055 / OF4) (Bacillus pseudofirmus).